Consider the following 462-residue polypeptide: MAKSLQDVLDNAGNAVDFLRNQQTGPNVYPGVPAEYSNWRNEQRAWAKTAVLFNQSYHMVELMVEGPDAFAFLNYLGINSFKNFAPGKAKQWVPVTAEGYVIGDVILFYLAENQFNLVGRAPAIEWAEFHAATGKWNVTLTRDERTALRTDGVRRHYRFQLQGPNAMAILTDAMGQTPPDLKFFNMADIQIAGKTVGALRHGMAGQPGYELYGPWADYEAVHSALVAAGKNHGLALVGGRAYSSNTLESGWVPSPFPGYLFGEGSADFRKWAGENSYGAKCSIGGSYVPESLEGYGLTPWDIGYGIIVKFDHDFIGKEALEKMANEPHLEKVTLALDDEDMLRVMSSYFSDSGRAKYFEFPSAVYSMHPYDSVLVDGKHVGVSTWVGYSSNEGKMLTLAMIDPKYAKPGTEVSLLWGEPNGGTSKPTVEPHEQTEIKAVVAPVPYSAVARTGYADSWRTKKA.

Belongs to the GcvT family.

It catalyses the reaction syringate + (6S)-5,6,7,8-tetrahydrofolate = 3-O-methylgallate + (6S)-5-methyl-5,6,7,8-tetrahydrofolate. It functions in the pathway secondary metabolite metabolism; lignin degradation. Involved in the catabolism of syringate. Catalyzes the conversion of syringate to 3-O-methylgallate (3MGA) in the presence of tetrahydrofolate. Has weak activity with vanillate and 3-O-methylgallate. This chain is Syringate O-demethylase, found in Sphingobium sp. (strain NBRC 103272 / SYK-6).